The sequence spans 651 residues: Forkhead box protein K2 (651 aa).

The span at 1–13 shows a compositional bias: low complexity; sequence MAAAAALSGAGAP. Residues 1–29 form a disordered region; the sequence is MAAAAALSGAGAPPAGGGAGGGGSPPGGW. Residues 14-26 are compositionally biased toward gly residues; the sequence is PAGGGAGGGGSPP. At Ser24 the chain carries Phosphoserine. The FHA domain occupies 48–119; sequence VTIGRNSSQG…NGVFVDGVFQ (72 aa). Residues 120 to 162 form a required for interaction with DVL2 and SUDS3 region; that stretch reads RRGAPPLQLPRVCTFRFPSTNIKITFTALSSEKREKQEAPESP. Omega-N-methylarginine is present on Arg135. 2 disordered regions span residues 150–171 and 194–251; these read SEKR…PHIS and TISA…SKPP. Glycyl lysine isopeptide (Lys-Gly) (interchain with G-Cter in SUMO2) cross-links involve residues Lys152 and Lys155. Over residues 194–203 the composition is skewed to polar residues; that stretch reads TISAANSCPS. Ser230 is modified (phosphoserine). Residues 233-249 are compositionally biased toward basic and acidic residues; that stretch reads ENEKEASGGDSPKDDSK. Residues 249-344 constitute a DNA-binding region (fork-head); the sequence is KPPYSYAQLI…EQAFRKRRPR (96 aa). Residues 291-309 form a DNA-binding; major groove region; that stretch reads KGWQNSIRHNLSLNRYFIK. Mg(2+) contacts are provided by Leu301, Ser302, Asn304, and Phe307. DNA-binding; minor groove stretches follow at residues 319-323 and 339-344; these read KGSFW and RKRRPR. Positions 350 to 399 are disordered; it reads RTPLGPLSSRSAPASPNHAGVLSAHSSGAQTPESLSREGSPAPLEPEPGA. A Phosphoserine modification is found at Ser364. Over residues 373–383 the composition is skewed to polar residues; it reads AHSSGAQTPES. Phosphoserine is present on residues Ser389, Ser415, and Ser419. Lys518 is covalently cross-linked (Glycyl lysine isopeptide (Lys-Gly) (interchain with G-Cter in SUMO2)). Ser590 bears the Phosphoserine mark. The segment covering 601–614 has biased composition (polar residues); it reads ASASLPTKRQNGDQ. The interval 601 to 623 is disordered; it reads ASASLPTKRQNGDQAEQPELKRV. Lys624 participates in a covalent cross-link: Glycyl lysine isopeptide (Lys-Gly) (interchain with G-Cter in SUMO2).

In terms of assembly, component of SIN3A-, but not SIN3B-, containing multiprotein complexes. Interacts with DVL1, DVL2 (when phosphorylated) and DVL3; the interaction induces DVL2 nuclear translocation. Interacts with SUDS3. Interacts with BAP1 (when phosphorylated); leading to recruit the PR-DUB complex and repress FOXK2 target genes. Accessory component of the polycomb repressive deubiquitinase (PR-DUB) complex, at least composed of BAP1, one of ASXL1, ASXL2 or (probably) ASXL3 and one of MBD5 or MBD6. The PR-DUB core associates with a number of accessory proteins, including FOXK1, FOXK2, KDM1B, HCFC1 and OGT. Post-translationally, hyperphosphorylated during mitosis by CDK1 and, to a lower extent, CDK2. Phosphorylation at Ser-364 and Ser-419 affects stability by promoting degradation. Expressed in a wide range of adult brain regions, namely the piriform cortex, the major islands of Calleja and cells lining the lateral ventricles, the bed nucleus of stria terminalis, the paraventricular thalamic nucleus, habenula and all structures of the hippocampus. Also present in the hypothalamus, cerebral cortex and in the Purkinje cell layer in the cerebellum. Additionally expressed in dopamine neurons of the substantia and more sparsely in the ventral tegmental area.

It is found in the nucleus. Its subcellular location is the cytoplasm. Functionally, transcriptional regulator involved in different processes such as glucose metabolism, aerobic glycolysis and autophagy. Recognizes and binds the forkhead DNA sequence motif (5'-GTAAACA-3') and can both act as a transcription activator or repressor, depending on the context. Together with FOXK1, acts as a key regulator of metabolic reprogramming towards aerobic glycolysis, a process in which glucose is converted to lactate in the presence of oxygen. Acts by promoting expression of enzymes for glycolysis (such as hexokinase-2 (HK2), phosphofructokinase, pyruvate kinase (PKLR) and lactate dehydrogenase), while suppressing further oxidation of pyruvate in the mitochondria by up-regulating pyruvate dehydrogenase kinases PDK1 and PDK4. Probably plays a role in gluconeogenesis during overnight fasting, when lactate from white adipose tissue and muscle is the main substrate. Together with FOXK1, acts as a negative regulator of autophagy in skeletal muscle: in response to starvation, enters the nucleus, binds the promoters of autophagy genes and represses their expression, preventing proteolysis of skeletal muscle proteins. In addition to the 5'-GTAAACA-3' DNA motif, also binds the 5'-TGANTCA-3' palindromic DNA motif, and co-associates with JUN/AP-1 to activate transcription. Also able to bind to a minimal DNA heteroduplex containing a G/T-mismatch with 5'-TRT[G/T]NB-3' sequence. Binds to NFAT-like motifs (purine-rich) in the IL2 promoter. Positively regulates WNT/beta-catenin signaling by translocating DVL proteins into the nucleus. Accessory component of the polycomb repressive deubiquitinase (PR-DUB) complex; recruits the PR-DUB complex to specific FOXK2-bound genes. The chain is Forkhead box protein K2 from Mus musculus (Mouse).